Here is a 340-residue protein sequence, read N- to C-terminus: 2-deoxy-scyllo-inosamine dehydrogenase (340 aa).

Residues Cys-37, His-59, Cys-89, Cys-92, Cys-95, Cys-103, and Glu-144 each coordinate Zn(2+).

Belongs to the zinc-containing alcohol dehydrogenase family. DOIA dehydrogenase subfamily. Requires Zn(2+) as cofactor.

It catalyses the reaction 2-deoxy-scyllo-inosamine + NADP(+) = 3-amino-2,3-dideoxy-scyllo-inosose + NADPH + H(+). The enzyme catalyses 2-deoxy-scyllo-inosamine + NAD(+) = 3-amino-2,3-dideoxy-scyllo-inosose + NADH + H(+). The protein operates within metabolic intermediate biosynthesis; 2-deoxystreptamine biosynthesis; 2-deoxystreptamine from D-glucose 6-phosphate: step 3/4. Its pathway is antibiotic biosynthesis; neomycin biosynthesis. Functionally, catalyzes the oxidation of 2-deoxy-scyllo-inosamine (DOIA) with NAD(+) or NADP(+), forming 3-amino-2,3-dideoxy-scyllo-inosose (amino-DOI). This Streptomyces fradiae (Streptomyces roseoflavus) protein is 2-deoxy-scyllo-inosamine dehydrogenase (neoA).